The sequence spans 419 residues: Peroxisome biogenesis factor 10 (419 aa).

The Peroxisomal matrix portion of the chain corresponds to 1–27 (MPPSEEIKLRAVSPRPDFKANYLEFAN). The chain crosses the membrane as a helical span at residues 28 to 57 (APAIVRANQKDSYFETVLRDKLQNVIQIFK). A topological domain (cytoplasmic) is located at residue G58. Residues 59-80 (QRFTHTHPEEIGVAAKALYLSL) form a helical membrane-spanning segment. The Peroxisomal matrix portion of the chain corresponds to 81–108 (TTLLGTKTLGEEYVDLIYVSRDGKRIPR). A helical transmembrane segment spans residues 109–141 (YLARAGFIFAYAILPYFLTRLFRRLKSSSTPKD). Residues 142–158 (EVTEEKINKELPISLRI) lie on the Cytoplasmic side of the membrane. The chain crosses the membrane as a helical span at residues 159–185 (EKYLSNMSYSKVLDTIMNLHIAVFYFS). The Peroxisomal matrix portion of the chain corresponds to 186-215 (GQFYNISKRFFSMRYAFGHKINKERTPNGN). A helical transmembrane segment spans residues 216 to 235 (YELLGGLIVLQLVMKSLGGF). Residues 236–419 (KGLIGSFTGN…RTLGYFLVVF (184 aa)) are Cytoplasmic-facing. Residues C298, C301, C313, H315, C318, C321, C334, and C347 each contribute to the Zn(2+) site. Residues 298–360 (CMLCLSYMTN…FYIPTLNKIC (63 aa)) form an RING-type zinc finger.

It belongs to the pex2/pex10/pex12 family. In terms of assembly, component of the peroxisomal translocation complex, composed of at least PEX3, PEX2, PEX10 and PEX12. Interacts with PEX19.

The protein localises to the peroxisome membrane. The catalysed reaction is S-ubiquitinyl-[E2 ubiquitin-conjugating enzyme]-L-cysteine + [acceptor protein]-L-lysine = [E2 ubiquitin-conjugating enzyme]-L-cysteine + N(6)-ubiquitinyl-[acceptor protein]-L-lysine.. The protein operates within protein modification; protein ubiquitination. With respect to regulation, the E3 ubiquitin-protein ligase activity is stimulated by PEX12. Functionally, E3 ubiquitin-protein ligase component of the peroxisomal translocation complex. The two types of peroxisomal matrix targeting signals, PTS1 and PTS2, are first recognized in the cytosol by their receptors PEX5 and PEX7, respectively, which then carry the cargo to the peroxisomal membrane. The peroxisomal targeting signal (PTS) receptor-cargo complexes interact with peroxisomal membrane protein (PMP) components of the docking complex. They have then additional downstream interactions with the translocation complex, leading to the transport of fully folded and oligomerized cargo into the peroxisome matrix. The peroxisomal translocation complex forms the retrotranslocation channel with each subunit contributing transmembrane segments that coassemble into an open channel that specifically allows the passage of PEX5 and PEX20 through the peroxisomal membrane. Specifically catalyzes monoubiquitination of PEX5 and/or PEX20 at 'Cys-6' and 'Cys-8', respectively, a modification that acts as a signal for PEX5 or PEX20 export from peroxisomes to the cytosol, thereby promoting PEX5 and PEX20 recycling. The protein is Peroxisome biogenesis factor 10 of Komagataella pastoris (Yeast).